The sequence spans 951 residues: Multiple C2 and transmembrane domain-containing protein 1 (951 aa).

Disordered stretches follow at residues 29-79 (LGVG…RWSG), 92-117 (SSSQ…AEQG), 129-198 (LPVA…QKSS), and 210-231 (LEPA…ALQK). The span at 31–43 (VGKGKGGGGGRAG) shows a compositional bias: gly residues. A compositionally biased stretch (low complexity) spans 147–168 (PGGRSPDSAPSSSSASSSLSSS). The segment covering 174–184 (RGDRVRDESTR) has biased composition (basic and acidic residues). Over residues 219–228 (PARGPAEPQA) the composition is skewed to low complexity. 3 consecutive C2 domains span residues 240 to 358 (KIST…DVTL), 404 to 521 (QTQS…KLEL), and 555 to 676 (QKER…AYVL). Ca(2+) is bound by residues Asp275, Asp281, Asp328, Asp330, Asp336, Asp438, Asp444, Asp491, Asp493, Asp499, Asp594, Asp600, Asp646, Asp648, and Asp654. A run of 2 helical transmembrane segments spans residues 763–783 (FVLF…LLLL) and 866–886 (PFLS…LYFI).

This sequence belongs to the MCTP family. Ca(2+) serves as cofactor.

The protein resides in the cytoplasmic vesicle. It localises to the secretory vesicle. It is found in the synaptic vesicle membrane. Its subcellular location is the recycling endosome. The protein localises to the endoplasmic reticulum membrane. Its function is as follows. Calcium sensor which is essential for the stabilization of normal baseline neurotransmitter release and for the induction and long-term maintenance of presynaptic homeostatic plasticity. In Mus musculus (Mouse), this protein is Multiple C2 and transmembrane domain-containing protein 1.